A 359-amino-acid chain; its full sequence is Gap junction alpha-5 protein (359 aa).

Topologically, residues 1–19 (MGDWSFLGEFLEEVHKHST) are cytoplasmic. A helical membrane pass occupies residues 20–40 (VIGKVWLTVLFIFRMLVLGTA). Topologically, residues 41–76 (AESSWGDEQADFLCDTMQPGCENVCYDQAFPISHIR) are extracellular. The chain crosses the membrane as a helical span at residues 77-97 (YWVLQVIFVSTPSLVYLGHAV). The Cytoplasmic segment spans residues 98–165 (HMVRVQEKRK…CSILIRTTME (68 aa)). The helical transmembrane segment at 166 to 186 (VAFIVGQYLLYGVFLDTLHVC) threads the bilayer. At 187–206 (RRSPCPHPVNCYVSRPTEKN) the chain is on the extracellular side. The chain crosses the membrane as a helical span at residues 207 to 227 (VFIVFMLAVAGLSLFLSLAEL). Residues 228-359 (YHLGWKKIRQ…SKARSDDLSV (132 aa)) lie on the Cytoplasmic side of the membrane. Disordered stretches follow at residues 285 to 305 (SNKM…VRSQ) and 317 to 359 (RYAQ…DLSV). Phosphoserine is present on residues S354 and S358.

The protein belongs to the connexin family. Alpha-type (group II) subfamily. In terms of assembly, a connexon is composed of a hexamer of connexins.

It is found in the cell membrane. The protein localises to the cell junction. The protein resides in the gap junction. One gap junction consists of a cluster of closely packed pairs of transmembrane channels, the connexons, through which materials of low MW diffuse from one cell to a neighboring cell. This is Gap junction alpha-5 protein (GJA5) from Bos taurus (Bovine).